The primary structure comprises 281 residues: 3-methyl-2-oxobutanoate hydroxymethyltransferase (281 aa).

Residues Asp49 and Asp88 each coordinate Mg(2+). Residues 49–50, Asp88, and Lys118 each bind 3-methyl-2-oxobutanoate; that span reads DS. Glu120 provides a ligand contact to Mg(2+). Residue Glu186 is the Proton acceptor of the active site.

It belongs to the PanB family. In terms of assembly, homodecamer; pentamer of dimers. Requires Mg(2+) as cofactor.

It is found in the cytoplasm. It carries out the reaction 3-methyl-2-oxobutanoate + (6R)-5,10-methylene-5,6,7,8-tetrahydrofolate + H2O = 2-dehydropantoate + (6S)-5,6,7,8-tetrahydrofolate. It functions in the pathway cofactor biosynthesis; (R)-pantothenate biosynthesis; (R)-pantoate from 3-methyl-2-oxobutanoate: step 1/2. Catalyzes the reversible reaction in which hydroxymethyl group from 5,10-methylenetetrahydrofolate is transferred onto alpha-ketoisovalerate to form ketopantoate. The protein is 3-methyl-2-oxobutanoate hydroxymethyltransferase of Chelativorans sp. (strain BNC1).